An 855-amino-acid chain; its full sequence is Cytosolic phospholipase A2 zeta (855 aa).

Residues Glu-27–Phe-145 form the C2 domain. Residues Asp-60, Asp-66, Asp-116, Asp-118, and Asp-123 each contribute to the Ca(2+) site. The PLA2c domain maps to Met-304–Gly-855. Catalysis depends on Ser-393, which acts as the Nucleophile. Asp-685 serves as the catalytic Proton acceptor.

It depends on Ca(2+) as a cofactor. As to expression, strongly expressed in thyroid, expressed at intermediate level in stomach and at very low level in large intestine and prostate.

The protein resides in the cytoplasm. The protein localises to the cytosol. It localises to the cell membrane. Its subcellular location is the mitochondrion. The catalysed reaction is a 1,2-diacyl-sn-glycero-3-phosphocholine + H2O = a 1-acyl-sn-glycero-3-phosphocholine + a fatty acid + H(+). The enzyme catalyses a 1-O-alkyl-2-acyl-sn-glycero-3-phosphocholine + H2O = a 1-O-alkyl-sn-glycero-3-phosphocholine + a fatty acid + H(+). It catalyses the reaction 1-hexadecanoyl-2-(9Z-octadecenoyl)-sn-glycero-3-phosphocholine + H2O = 2-(9Z-octadecenoyl)-sn-glycero-3-phosphocholine + hexadecanoate + H(+). It carries out the reaction 1-hexadecanoyl-2-(9Z,12Z-octadecadienoyl)-sn-glycero-3-phosphocholine + H2O = (9Z,12Z)-octadecadienoate + 1-hexadecanoyl-sn-glycero-3-phosphocholine + H(+). The catalysed reaction is 1-hexadecanoyl-2-(5Z,8Z,11Z,14Z-eicosatetraenoyl)-sn-glycero-3-phosphocholine + H2O = 1-hexadecanoyl-sn-glycero-3-phosphocholine + (5Z,8Z,11Z,14Z)-eicosatetraenoate + H(+). The enzyme catalyses 1-hexadecanoyl-2-(9Z,12Z-octadecadienoyl)-sn-glycero-3-phosphoethanolamine + H2O = 1-hexadecanoyl-sn-glycero-3-phosphoethanolamine + (9Z,12Z)-octadecadienoate + H(+). It catalyses the reaction 1-hexadecanoyl-2-(5Z,8Z,11Z,14Z-eicosatetraenoyl)-sn-glycero-3-phosphoethanolamine + H2O = 1-hexadecanoyl-sn-glycero-3-phosphoethanolamine + (5Z,8Z,11Z,14Z)-eicosatetraenoate + H(+). It carries out the reaction 1-(5Z,8Z,11Z,14Z-eicosatetraenoyl)-2-O-hexadecyl-sn-glycero-3-phosphocholine + H2O = 2-O-hexadecyl-sn-glycero-3-phosphocholine + (5Z,8Z,11Z,14Z)-eicosatetraenoate + H(+). The catalysed reaction is 1-O-hexadecyl-2-(5Z,8Z,11Z,14Z)-eicosatetraenoyl-sn-glycero-3-phosphocholine + H2O = 1-O-hexadecyl-sn-glycero-3-phosphocholine + (5Z,8Z,11Z,14Z)-eicosatetraenoate + H(+). The enzyme catalyses 1-hexadecanoyl-sn-glycero-3-phosphocholine + H2O = sn-glycerol 3-phosphocholine + hexadecanoate + H(+). With respect to regulation, stimulated by cytosolic Ca(2+). Functionally, has calcium-dependent phospholipase and lysophospholipase activities with a potential role in membrane lipid remodeling and biosynthesis of lipid mediators. Preferentially hydrolyzes the ester bond of the fatty acyl group attached at sn-2 position of phospholipids (phospholipase A2 activity). Selectively hydrolyzes sn-2 arachidonoyl group from membrane phospholipids, providing the precursor for eicosanoid biosynthesis. In myocardial mitochondria, plays a major role in arachidonate release that is metabolically channeled to the formation of cardioprotective eicosanoids, epoxyeicosatrienoates (EETs). The chain is Cytosolic phospholipase A2 zeta (Pla2g4f) from Mus musculus (Mouse).